The chain runs to 187 residues: UPF0301 protein YPTS_3341 (187 aa).

This sequence belongs to the UPF0301 (AlgH) family.

The chain is UPF0301 protein YPTS_3341 from Yersinia pseudotuberculosis serotype IB (strain PB1/+).